The following is a 520-amino-acid chain: 4-hydroxyphenylacetate 3-monooxygenase oxygenase component (520 aa).

Belongs to the FADH(2)-utilizing monooxygenase family. 4-HPA 3-monooxygenase consists of a reductase component HpaC and an oxygenase component HpaB.

It carries out the reaction 4-hydroxyphenylacetate + FADH2 + O2 = 3,4-dihydroxyphenylacetate + FAD + H2O + H(+). It participates in aromatic compound metabolism; 4-hydroxyphenylacetate degradation; pyruvate and succinate semialdehyde from 4-hydroxyphenylacetate: step 1/7. Functionally, utilizes FADH(2) supplied by HpaC or by another flavin reductase, to catalyze the hydroxylation of 4-hydroxyphenylacetic acid, leading to the production of 3,4-DHPA. Can also oxidize phenol to catechol, and hydroxylate other phenol derivatives. The protein is 4-hydroxyphenylacetate 3-monooxygenase oxygenase component (hpaB) of Escherichia coli.